The sequence spans 451 residues: Midnolin-B (451 aa).

The region spanning 20 to 94 (MNLNIQSTTG…LTLLPSVEAG (75 aa)) is the Ubiquitin-like domain. 3 disordered regions span residues 187–254 (ASCT…RSRK), 331–372 (RNAK…QTEN), and 388–427 (QKRL…EGSL). Low complexity-rich tracts occupy residues 190–205 (TPGS…TSST), 237–250 (STRG…SPSS), and 336–347 (TSPQSTGPQQTT). Basic and acidic residues predominate over residues 363-372 (SGDRLRQTEN). Residues 388–397 (QKRLRRKARR) are compositionally biased toward basic residues. Over residues 413-426 (RTSSNSSTSSGEGS) the composition is skewed to low complexity.

The protein resides in the nucleus. It localises to the cytoplasm. It is found in the cytosol. The protein localises to the nucleolus. In terms of biological role, facilitates ubiquitin-independent proteasomal degradation of polycomb protein CBX4. Plays a role in inhibiting the activity of glucokinase GCK and both glucose-induced and basal insulin secretion. The sequence is that of Midnolin-B (midn-b) from Xenopus laevis (African clawed frog).